The chain runs to 380 residues: Chaperone protein DnaJ (380 aa).

The J domain maps to 5–70 (DFYDVLGVNR…QKRAAYDQYG (66 aa)). The segment at 139–217 (GCEKQIRIPT…CHGAGRVKSQ (79 aa)) adopts a CR-type zinc-finger fold. Zn(2+) contacts are provided by Cys152, Cys155, Cys169, Cys172, Cys191, Cys194, Cys205, and Cys208. CXXCXGXG motif repeat units follow at residues 152-159 (CSHCHGSG), 169-176 (CPTCGGAG), 191-198 (CPTCHGSG), and 205-212 (CNICHGAG).

It belongs to the DnaJ family. In terms of assembly, homodimer. Zn(2+) serves as cofactor.

It localises to the cytoplasm. Participates actively in the response to hyperosmotic and heat shock by preventing the aggregation of stress-denatured proteins and by disaggregating proteins, also in an autonomous, DnaK-independent fashion. Unfolded proteins bind initially to DnaJ; upon interaction with the DnaJ-bound protein, DnaK hydrolyzes its bound ATP, resulting in the formation of a stable complex. GrpE releases ADP from DnaK; ATP binding to DnaK triggers the release of the substrate protein, thus completing the reaction cycle. Several rounds of ATP-dependent interactions between DnaJ, DnaK and GrpE are required for fully efficient folding. Also involved, together with DnaK and GrpE, in the DNA replication of plasmids through activation of initiation proteins. The protein is Chaperone protein DnaJ of Laribacter hongkongensis (strain HLHK9).